A 191-amino-acid chain; its full sequence is Peptidyl-tRNA hydrolase (191 aa).

Residue Tyr-14 coordinates tRNA. His-19 functions as the Proton acceptor in the catalytic mechanism. Tyr-64, Asn-66, and Asn-112 together coordinate tRNA.

Belongs to the PTH family. Monomer.

The protein localises to the cytoplasm. It carries out the reaction an N-acyl-L-alpha-aminoacyl-tRNA + H2O = an N-acyl-L-amino acid + a tRNA + H(+). In terms of biological role, hydrolyzes ribosome-free peptidyl-tRNAs (with 1 or more amino acids incorporated), which drop off the ribosome during protein synthesis, or as a result of ribosome stalling. Its function is as follows. Catalyzes the release of premature peptidyl moieties from peptidyl-tRNA molecules trapped in stalled 50S ribosomal subunits, and thus maintains levels of free tRNAs and 50S ribosomes. This is Peptidyl-tRNA hydrolase from Clostridium botulinum (strain Alaska E43 / Type E3).